The chain runs to 459 residues: tRNA modification GTPase MnmE (459 aa).

(6S)-5-formyl-5,6,7,8-tetrahydrofolate is bound by residues Arg23, Glu88, and Arg127. Residues 223–381 (GLDVVIVGKP…LKEYIKDLFF (159 aa)) form the TrmE-type G domain. K(+) is bound at residue Asn233. GTP contacts are provided by residues 233-238 (NVGKSS), 252-258 (TEIPGTT), and 277-280 (DTAG). A Mg(2+)-binding site is contributed by Ser237. Thr252, Ile254, and Thr257 together coordinate K(+). Thr258 contacts Mg(2+). Lys459 lines the (6S)-5-formyl-5,6,7,8-tetrahydrofolate pocket.

This sequence belongs to the TRAFAC class TrmE-Era-EngA-EngB-Septin-like GTPase superfamily. TrmE GTPase family. As to quaternary structure, homodimer. Heterotetramer of two MnmE and two MnmG subunits. K(+) serves as cofactor.

The protein resides in the cytoplasm. Its function is as follows. Exhibits a very high intrinsic GTPase hydrolysis rate. Involved in the addition of a carboxymethylaminomethyl (cmnm) group at the wobble position (U34) of certain tRNAs, forming tRNA-cmnm(5)s(2)U34. The polypeptide is tRNA modification GTPase MnmE (Clostridium tetani (strain Massachusetts / E88)).